The primary structure comprises 324 residues: Methenyltetrahydromethanopterin cyclohydrolase (324 aa).

It belongs to the MCH family.

The protein localises to the cytoplasm. The enzyme catalyses 5,10-methenyl-5,6,7,8-tetrahydromethanopterin + H2O = N(5)-formyl-5,6,7,8-tetrahydromethanopterin + H(+). The protein operates within one-carbon metabolism; formaldehyde degradation; formate from formaldehyde (H(4)MPT route): step 3/5. In terms of biological role, catalyzes the hydrolysis of methenyl-H(4)MPT(+) to 5-formyl-H(4)MPT. The chain is Methenyltetrahydromethanopterin cyclohydrolase from Methylobacterium sp. (strain 4-46).